The primary structure comprises 1283 residues: Bifunctional dioxygenase (DOX)-epoxy alcohol synthase (EAS) (1283 aa).

Positions 1–64 (MAEHKNGVAT…LPKEMGDGSY (64 aa)) are disordered. The segment at 130–476 (TNSFISQLWN…DGKFNDDELV (347 aa)) is fatty acid alpha-dioxygenase. His227 serves as a coordination point for heme b. Residue Tyr405 is part of the active site. His408 contributes to the heme b binding site. The tract at residues 684 to 1108 (INIIGYNAAK…WDDGCGTDLF (425 aa)) is epoxy alcohol synthase. Cys1035 is a binding site for heme.

This sequence in the N-terminal section; belongs to the peroxidase family. In the C-terminal section; belongs to the cytochrome P450 family. Homotetramer. Requires heme b as cofactor. It depends on heme as a cofactor.

It catalyses the reaction (9Z,12Z)-octadecadienoate + O2 = (8E,10R,12Z)-10-hydroperoxyoctadeca-8,12-dienoate. The catalysed reaction is (8E,10R,12Z)-10-hydroperoxyoctadeca-8,12-dienoate = (12S,13R)-epoxy-(10R)-hydroxy-(8E)-octadecenoate. The enzyme catalyses (9Z)-octadecenoate + O2 = (8R)-hydroperoxy-(9Z)-octadecenoate. Its function is as follows. Bifunctional dioxygenase (DOX)-epoxy alcohol synthase (EAS) that converts linoleic acid (18:2n-6) sequentially to 10(R)-hydroperoxy-8(E),12(Z)-octadecadienoic acid (10R-HPODE) and 10R-HPODE further to 12(13)-epoxy-10-hydroxy-8(E)-octa-decenoic acid as the end product. Linoleic acid is oxidized mainly to the R stereoisomer of 10-HPODE. The dioxygenase domain is also able to oygenate position C-8 of linoleic acid to produce 8(R)-hydroperoxy-8(E),12(Z)-octadecadienoic acid (8R-HPODE). This is Bifunctional dioxygenase (DOX)-epoxy alcohol synthase (EAS) from Fusarium oxysporum (strain Fo5176) (Fusarium vascular wilt).